A 323-amino-acid polypeptide reads, in one-letter code: 1D-myo-inositol 2-acetamido-2-deoxy-alpha-D-glucopyranoside deacetylase 1 (323 aa).

Histidine 30, aspartate 33, and histidine 165 together coordinate Zn(2+).

Belongs to the MshB deacetylase family. The cofactor is Zn(2+).

The enzyme catalyses 1D-myo-inositol 2-acetamido-2-deoxy-alpha-D-glucopyranoside + H2O = 1D-myo-inositol 2-amino-2-deoxy-alpha-D-glucopyranoside + acetate. Its function is as follows. Catalyzes the deacetylation of 1D-myo-inositol 2-acetamido-2-deoxy-alpha-D-glucopyranoside (GlcNAc-Ins) in the mycothiol biosynthesis pathway. This Catenulispora acidiphila (strain DSM 44928 / JCM 14897 / NBRC 102108 / NRRL B-24433 / ID139908) protein is 1D-myo-inositol 2-acetamido-2-deoxy-alpha-D-glucopyranoside deacetylase 1.